The sequence spans 427 residues: Histidine--tRNA ligase (427 aa).

This sequence belongs to the class-II aminoacyl-tRNA synthetase family. In terms of assembly, homodimer.

It is found in the cytoplasm. The enzyme catalyses tRNA(His) + L-histidine + ATP = L-histidyl-tRNA(His) + AMP + diphosphate + H(+). The sequence is that of Histidine--tRNA ligase from Proteus mirabilis (strain HI4320).